Consider the following 417-residue polypeptide: Serine hydroxymethyltransferase (417 aa).

(6S)-5,6,7,8-tetrahydrofolate is bound by residues L121 and 125 to 127; that span reads GHL. An N6-(pyridoxal phosphate)lysine modification is found at K229. Position 354 to 356 (354 to 356) interacts with (6S)-5,6,7,8-tetrahydrofolate; the sequence is SPF.

It belongs to the SHMT family. Homodimer. It depends on pyridoxal 5'-phosphate as a cofactor.

Its subcellular location is the cytoplasm. The catalysed reaction is (6R)-5,10-methylene-5,6,7,8-tetrahydrofolate + glycine + H2O = (6S)-5,6,7,8-tetrahydrofolate + L-serine. Its pathway is one-carbon metabolism; tetrahydrofolate interconversion. It functions in the pathway amino-acid biosynthesis; glycine biosynthesis; glycine from L-serine: step 1/1. In terms of biological role, catalyzes the reversible interconversion of serine and glycine with tetrahydrofolate (THF) serving as the one-carbon carrier. This reaction serves as the major source of one-carbon groups required for the biosynthesis of purines, thymidylate, methionine, and other important biomolecules. Also exhibits THF-independent aldolase activity toward beta-hydroxyamino acids, producing glycine and aldehydes, via a retro-aldol mechanism. The polypeptide is Serine hydroxymethyltransferase (Dichelobacter nodosus (strain VCS1703A)).